The following is a 717-amino-acid chain: Polyribonucleotide nucleotidyltransferase (717 aa).

Residues D488 and D494 each coordinate Mg(2+). Residues 555–614 (PRIEVMNIPVDKIREVIGSGGKVIREIVEKTGAKINIDDDGTVKIASASAKEIEAARKWI) enclose the KH domain. Positions 624–692 (GQVYEGTVVK…ERGKVRLSMK (69 aa)) constitute an S1 motif domain.

The protein belongs to the polyribonucleotide nucleotidyltransferase family. It depends on Mg(2+) as a cofactor.

Its subcellular location is the cytoplasm. It catalyses the reaction RNA(n+1) + phosphate = RNA(n) + a ribonucleoside 5'-diphosphate. Involved in mRNA degradation. Catalyzes the phosphorolysis of single-stranded polyribonucleotides processively in the 3'- to 5'-direction. This chain is Polyribonucleotide nucleotidyltransferase, found in Rhizobium meliloti (strain 1021) (Ensifer meliloti).